We begin with the raw amino-acid sequence, 300 residues long: Ribosomal protein bS6--L-glutamate ligase (300 aa).

The ATP-grasp domain occupies 104-287; the sequence is LQLLARQGID…IAGRMIQWIE (184 aa). ATP is bound by residues Lys141, 178–179, Asp187, and 211–213; these read EY and RSN. Residues Asp248, Glu260, and Asn262 each contribute to the Mg(2+) site. 3 residues coordinate Mn(2+): Asp248, Glu260, and Asn262.

The protein belongs to the RimK family. It depends on Mg(2+) as a cofactor. Requires Mn(2+) as cofactor.

An L-glutamate ligase that catalyzes the ATP-dependent post-translational addition of glutamate residues to the C-terminus of ribosomal protein bS6 (RpsF). Is also able to catalyze the synthesis of poly-alpha-glutamate in vitro, via ATP hydrolysis from unprotected glutamate as substrate. The number of glutamate residues added to either RpsF or to poly-alpha-glutamate changes with pH. The protein is Ribosomal protein bS6--L-glutamate ligase of Salmonella schwarzengrund (strain CVM19633).